Reading from the N-terminus, the 305-residue chain is Outer membrane protein assembly factor BamD (305 aa).

Positions 1-24 are cleaved as a signal peptide; sequence MLRIFQGRPAVTIAAVLVAASVAG. Residue Cys-25 is the site of N-palmitoyl cysteine attachment. Cys-25 carries S-diacylglycerol cysteine lipidation. TPR repeat units lie at residues 41-74, 78-111, 113-136, and 174-207; these read VELLYSTGADRLDRGNWNEAVDYFREVERQHPYS, RRSILMTGYAHYMGNQYAEAIGDADRFISLYPGN, SAQYAFYLKAICYFEQIVDVNRDQ, and AGKEMAIGRWYLKNGQTLAAIGRFKAVIERHQTT.

This sequence belongs to the BamD family. In terms of assembly, part of the Bam complex.

The protein localises to the cell outer membrane. Its function is as follows. Part of the outer membrane protein assembly complex, which is involved in assembly and insertion of beta-barrel proteins into the outer membrane. This is Outer membrane protein assembly factor BamD from Caulobacter vibrioides (strain ATCC 19089 / CIP 103742 / CB 15) (Caulobacter crescentus).